A 657-amino-acid chain; its full sequence is Translation factor GUF1, mitochondrial (657 aa).

A mitochondrion-targeting transit peptide spans 1–39 (MRGCLQSVKWLTSALRPSQSLASSTRYPRRLLSTSAPRN). The tr-type G domain maps to 59–239 (ERFRNFCIVA…TVIEQIPAPV (181 aa)). GTP contacts are provided by residues 68–75 (AHVDHGKS), 132–136 (DTPGH), and 186–189 (NKVD).

It belongs to the TRAFAC class translation factor GTPase superfamily. Classic translation factor GTPase family. LepA subfamily.

It is found in the mitochondrion inner membrane. It catalyses the reaction GTP + H2O = GDP + phosphate + H(+). Functionally, promotes mitochondrial protein synthesis. May act as a fidelity factor of the translation reaction, by catalyzing a one-codon backward translocation of tRNAs on improperly translocated ribosomes. Binds to mitochondrial ribosomes in a GTP-dependent manner. This chain is Translation factor GUF1, mitochondrial, found in Ajellomyces capsulatus (strain G186AR / H82 / ATCC MYA-2454 / RMSCC 2432) (Darling's disease fungus).